A 509-amino-acid chain; its full sequence is Flotillin-like protein FloT (509 aa).

Residues 1 to 3 (MTM) lie on the Cytoplasmic side of the membrane. Residues 4-24 (PIIMIIGVVFFLLIALIAVFI) lie within the membrane without spanning it. Residues 25-509 (TKYRTAGPDE…KEAKTIQKSE (485 aa)) lie on the Cytoplasmic side of the membrane. The segment at 119–301 (AAEQFLGKSK…KIIERQKQIE (183 aa)) is PHB domain. The tract at residues 203–509 (RIAQVKRDAD…KEAKTIQKSE (307 aa)) is required for correct localization. 4 short sequence motifs (EA repeat) span residues 342-344 (AEA), 357-360 (AEAE), 370-373 (AEAE), and 390-394 (AEAEA). Residues 485–509 (KGNVKQSINELTNEIKEAKTIQKSE) form a not required for correct localization region.

Belongs to the band 7/mec-2 family. Flotillin subfamily. Homooligomerizes. Oligomerizes in very large complexes in vitro. Interacts with FloA, FtsH, FtsX, OppA, SdhA and SecY in detergent-resistant membrane (DRM) fractions. Interacts with FtsH at midcell. Interacts with FloA. Interacts in vivo with KinC, FloA, FtsH and ResE. Interacts with ResE, colocalizes with ResE in FloT-only membrane rafts. Another study shows nearly complete colocalization with NfeD2, but only minor colocalization with FtsH or KinC.

It localises to the cell membrane. The protein resides in the membrane raft. Its function is as follows. Found in functional membrane microdomains (FMM) that may be equivalent to eukaryotic membrane rafts. FMMs are highly dynamic and increase in number as cells age. FloA and FloT function is partially redundant; double deletions have marked synthetic phenotypes. Flotillins are thought to be important factors in membrane fluidity, especially during periods of rapid growth in rich media. Whether specific proteins are associated with FMMs is controversial; in one study FloT rafts have been shown to include proteins involved in adaptation to stationary phase, while FloA-FloT rafts include proteins involved in differentiation including sporulation, biofilm formation and DNA uptake competence. Another (more finely resolved) study only showed association of NfeD2 with FloT rafts of all the proteins examined. Aids homooligomerization of KinC and KinD but not KinB, may prevent incorrect hetero-association of the above kinases. Simultaneous overexpression of both FloA and FloT leads to defects in cell division and differentiation, in part caused by stabilization of FtsH and its subsequent increased ability to degrade proteins. Cells make more biofilm, are about half as long, have less EzrA and more frequent Z-rings. Involved in spatial organization of membranes, perhaps recruiting proteins (e.g. NfeD2) to specific membrane regions. Plays a role in phosphorylation of master regulator Spo0A, an early sporulation event. Plays a non-redundant role with dynamin-like protein A (dynA) in membrane dynamics and cell shape. This chain is Flotillin-like protein FloT, found in Bacillus subtilis (strain 168).